The sequence spans 108 residues: uncharacterized protein (108 aa).

This is an uncharacterized protein from Acidianus sp. F28 (AFV-2).